Here is a 530-residue protein sequence, read N- to C-terminus: Chaperone Ric-8A (530 aa).

The residue at position 435 (Ser435) is a Phosphoserine; by CK2. Thr440 carries the phosphothreonine; by CK2 modification. Thr442 carries the post-translational modification Phosphothreonine. 4 positions are modified to phosphoserine: Ser501, Ser522, Ser523, and Ser527.

This sequence belongs to the synembryn family. Interacts with GDP-bound G alpha proteins GNAI1, GNAO1 and GNAQ, and with GNA13 with lower affinity. Does not interact with G-alpha proteins when they are in complex with subunits beta and gamma. Interacts (via C-terminus) with RGS14; the interaction stimulates the dissociation of the complex between RGS14 and the active GTP-bound form of GNAI1. Interacts with NCS1; interaction is favored in the absence of Ca(2+) and myristoylation of NCS1 is not required. Phosphorylated at Ser-435 and Thr-440 by CK2, stabilizing its interface with G alpha proteins.

It localises to the cytoplasm. It is found in the cell cortex. Functionally, chaperone that specifically binds and folds nascent G alpha proteins prior to G protein heterotrimer formation, promoting their stability and activity: folds GNAI1, GNAO1, GNA13 and GNAQ. Does not fold G(s) G-alpha proteins GNAS nor GNAL. Also acts as a guanine nucleotide exchange factor (GEF) for G alpha proteins by stimulating exchange of bound GDP for free GTP. Involved in regulation of microtubule pulling forces during mitotic movement of chromosomes by stimulating G(i)-alpha protein (GNAI1), possibly leading to release G(i)-alpha-GTP and NuMA proteins from the NuMA-GPSM2-G(i)-alpha-GDP complex. Also acts as an activator for G(q)-alpha (GNAQ) protein by enhancing the G(q)-coupled receptor-mediated ERK activation. This chain is Chaperone Ric-8A, found in Rattus norvegicus (Rat).